We begin with the raw amino-acid sequence, 93 residues long: Large ribosomal subunit protein uL23 (93 aa).

Belongs to the universal ribosomal protein uL23 family. Part of the 50S ribosomal subunit. Contacts protein L29, and trigger factor when it is bound to the ribosome.

In terms of biological role, one of the early assembly proteins it binds 23S rRNA. One of the proteins that surrounds the polypeptide exit tunnel on the outside of the ribosome. Forms the main docking site for trigger factor binding to the ribosome. This is Large ribosomal subunit protein uL23 from Campylobacter hominis (strain ATCC BAA-381 / DSM 21671 / CCUG 45161 / LMG 19568 / NCTC 13146 / CH001A).